The chain runs to 449 residues: Signal recognition particle protein (449 aa).

GTP contacts are provided by residues 109-116 (GLQGSGKT), 191-195 (DTAGR), and 249-252 (SRID).

Belongs to the GTP-binding SRP family. SRP54 subfamily. As to quaternary structure, part of the signal recognition particle protein translocation system, which is composed of SRP and FtsY. SRP is a ribonucleoprotein composed of Ffh and a 4.5S RNA molecule.

The protein localises to the cytoplasm. The catalysed reaction is GTP + H2O = GDP + phosphate + H(+). Functionally, involved in targeting and insertion of nascent membrane proteins into the cytoplasmic membrane. Binds to the hydrophobic signal sequence of the ribosome-nascent chain (RNC) as it emerges from the ribosomes. The SRP-RNC complex is then targeted to the cytoplasmic membrane where it interacts with the SRP receptor FtsY. Interaction with FtsY leads to the transfer of the RNC complex to the Sec translocase for insertion into the membrane, the hydrolysis of GTP by both Ffh and FtsY, and the dissociation of the SRP-FtsY complex into the individual components. In Rickettsia conorii (strain ATCC VR-613 / Malish 7), this protein is Signal recognition particle protein.